The sequence spans 307 residues: Fructokinase (307 aa).

The protein belongs to the carbohydrate kinase PfkB family.

It catalyses the reaction D-fructose + ATP = D-fructose 6-phosphate + ADP + H(+). The sequence is that of Fructokinase (scrK) from Salmonella typhimurium.